The chain runs to 199 residues: Probable NADH dehydrogenase [ubiquinone] iron-sulfur protein 7, mitochondrial (199 aa).

The transit peptide at 1 to 16 (MLSALRTAGALSTRRL) directs the protein to the mitochondrion. [4Fe-4S] cluster contacts are provided by cysteine 74, cysteine 75, cysteine 139, and cysteine 169.

It belongs to the complex I 20 kDa subunit family. As to quaternary structure, complex I is composed of 45 different subunits This is a component of the iron-sulfur (IP) fragment of the enzyme. The cofactor is [4Fe-4S] cluster.

It localises to the mitochondrion. It carries out the reaction a ubiquinone + NADH + 5 H(+)(in) = a ubiquinol + NAD(+) + 4 H(+)(out). In terms of biological role, core subunit of the mitochondrial membrane respiratory chain NADH dehydrogenase (Complex I) that is believed to belong to the minimal assembly required for catalysis. Complex I functions in the transfer of electrons from NADH to the respiratory chain. The immediate electron acceptor for the enzyme is believed to be ubiquinone. In Caenorhabditis briggsae, this protein is Probable NADH dehydrogenase [ubiquinone] iron-sulfur protein 7, mitochondrial.